The sequence spans 85 residues: UPF0386 protein Atu1321 (85 aa).

It belongs to the UPF0386 family.

This is UPF0386 protein Atu1321 from Agrobacterium fabrum (strain C58 / ATCC 33970) (Agrobacterium tumefaciens (strain C58)).